The primary structure comprises 465 residues: GTPase Der (465 aa).

EngA-type G domains are found at residues 3-167 and 179-352; these read PLVA…PERS and IHIA…VSAL. GTP-binding positions include 9–16, 57–61, 119–122, 185–192, 232–236, and 297–300; these read GRPNVGKS, DTGGM, NKID, DTAGL, and NKWD. A KH-like domain is found at 353–437; it reads RQFSTSEVNK…PVRFLFREGD (85 aa).

This sequence belongs to the TRAFAC class TrmE-Era-EngA-EngB-Septin-like GTPase superfamily. EngA (Der) GTPase family. As to quaternary structure, associates with the 50S ribosomal subunit.

In terms of biological role, GTPase that plays an essential role in the late steps of ribosome biogenesis. The polypeptide is GTPase Der (Xylella fastidiosa (strain M23)).